We begin with the raw amino-acid sequence, 297 residues long: MSAWAAASLSRAAARCLLARGPGVRAAPPRDPRPSHPEPRGCGAAPGRTLHFTAAVPAGHNKWSKVRHIKGPKDVERSRIFSKLCLNIRLAVKEGGPNPEHNSNLANILEVCRSKHMPKSTIETALKMEKSKDTYLLYEGRGPGGSSLLIEALSNSSHKCQADIRHILNKNGGVMAVGARHSFDKKGVIVVEVEDREKKAVNLERALEMAIEAGAEDVKETEDEEERNVFKFICDASSLHQVRKKLDSLGLCSVSCALEFIPNSKVQLAEPDLEQAAHLIQALSNHEDVIHVYDNIE.

The segment at 20-45 (RGPGVRAAPPRDPRPSHPEPRGCGAA) is disordered. Residues 28–39 (PPRDPRPSHPEP) are compositionally biased toward basic and acidic residues. A coiled-coil region spans residues 191 to 227 (VEVEDREKKAVNLERALEMAIEAGAEDVKETEDEEER).

Belongs to the TACO1 family.

Its subcellular location is the mitochondrion. Functionally, acts as a translational activator of mitochondrially-encoded cytochrome c oxidase 1. This is Translational activator of cytochrome c oxidase 1 (TACO1) from Homo sapiens (Human).